The primary structure comprises 344 residues: Thiamine thiazole synthase (344 aa).

Substrate-binding positions include Cys90, 111–112, Gly119, and Val184; that span reads EA. Residue Cys232 is modified to 2,3-didehydroalanine (Cys). Residues Asp234, His249, Met301, and 311 to 313 each bind substrate; that span reads RMG.

This sequence belongs to the THI4 family. Homooctamer. Interacts with cyp-41. Fe cation is required as a cofactor. In terms of processing, during the catalytic reaction, a sulfide is transferred from Cys-232 to a reaction intermediate, generating a dehydroalanine residue.

The protein localises to the cytoplasm. Its subcellular location is the nucleus. The catalysed reaction is [ADP-thiazole synthase]-L-cysteine + glycine + NAD(+) = [ADP-thiazole synthase]-dehydroalanine + ADP-5-ethyl-4-methylthiazole-2-carboxylate + nicotinamide + 3 H2O + 2 H(+). Functionally, involved in biosynthesis of the thiamine precursor thiazole. Catalyzes the conversion of NAD and glycine to adenosine diphosphate 5-(2-hydroxyethyl)-4-methylthiazole-2-carboxylic acid (ADT), an adenylated thiazole intermediate. The reaction includes an iron-dependent sulfide transfer from a conserved cysteine residue of the protein to a thiazole intermediate. The enzyme can only undergo a single turnover, which suggests it is a suicide enzyme. May have additional roles in adaptation to various stress conditions and in DNA damage tolerance. This Neurospora crassa (strain ATCC 24698 / 74-OR23-1A / CBS 708.71 / DSM 1257 / FGSC 987) protein is Thiamine thiazole synthase.